A 369-amino-acid polypeptide reads, in one-letter code: NAD(P)H-quinone oxidoreductase subunit 1, chloroplastic (369 aa).

The next 5 helical transmembrane spans lie at 25–45 (FGFIWIITPILTYTLGVTIGI), 104–124 (VMVVVPVFLSYLVIPLGHGII), 130–150 (IGVFFWIAVSSVAPLGLLTAG), 270–290 (LSATILYLGGWNSPIPFLFLP), and 306–326 (VISITIAIIITLAKAYSFLFI).

It belongs to the complex I subunit 1 family. NDH is composed of at least 16 different subunits, 5 of which are encoded in the nucleus.

Its subcellular location is the plastid. The protein resides in the chloroplast thylakoid membrane. It carries out the reaction a plastoquinone + NADH + (n+1) H(+)(in) = a plastoquinol + NAD(+) + n H(+)(out). It catalyses the reaction a plastoquinone + NADPH + (n+1) H(+)(in) = a plastoquinol + NADP(+) + n H(+)(out). NDH shuttles electrons from NAD(P)H:plastoquinone, via FMN and iron-sulfur (Fe-S) centers, to quinones in the photosynthetic chain and possibly in a chloroplast respiratory chain. The immediate electron acceptor for the enzyme in this species is believed to be plastoquinone. Couples the redox reaction to proton translocation, and thus conserves the redox energy in a proton gradient. This Huperzia lucidula (Shining clubmoss) protein is NAD(P)H-quinone oxidoreductase subunit 1, chloroplastic.